The chain runs to 290 residues: Large ribosomal subunit protein uL2m (290 aa).

Belongs to the universal ribosomal protein uL2 family. Probably part of the large ribosomal subunit.

Its subcellular location is the hydrogenosome. This Nyctotherus ovalis protein is Large ribosomal subunit protein uL2m (rpl2).